The following is a 443-amino-acid chain: ATP-dependent protease ATPase subunit HslU (443 aa).

Residues Ile19, 61–66 (GVGKTE), Asp256, Glu321, and Arg393 each bind ATP.

The protein belongs to the ClpX chaperone family. HslU subfamily. A double ring-shaped homohexamer of HslV is capped on each side by a ring-shaped HslU homohexamer. The assembly of the HslU/HslV complex is dependent on binding of ATP.

Its subcellular location is the cytoplasm. Its function is as follows. ATPase subunit of a proteasome-like degradation complex; this subunit has chaperone activity. The binding of ATP and its subsequent hydrolysis by HslU are essential for unfolding of protein substrates subsequently hydrolyzed by HslV. HslU recognizes the N-terminal part of its protein substrates and unfolds these before they are guided to HslV for hydrolysis. This is ATP-dependent protease ATPase subunit HslU from Cupriavidus pinatubonensis (strain JMP 134 / LMG 1197) (Cupriavidus necator (strain JMP 134)).